Consider the following 260-residue polypeptide: Peptidase inhibitor 15-A (260 aa).

Positions 1-21 are cleaved as a signal peptide; sequence MNENRLAIDILLLCISCGASA. The propeptide occupies 22 to 62; sequence LAGFSPTASSSLPATNLTDIGFAPPKYLTEAANIPKTRRKR. N-linked (GlcNAc...) asparagine glycans are attached at residues N37 and N126. The SCP domain maps to 73–213; it reads LDYHNKVRGK…KRATYLVCNY (141 aa).

Belongs to the CRISP family.

It is found in the secreted. Its function is as follows. Serine protease inhibitor which displays weak inhibitory activity against trypsin. May play a role in facial patterning during embryonic development. This chain is Peptidase inhibitor 15-A (pi15a), found in Danio rerio (Zebrafish).